We begin with the raw amino-acid sequence, 107 residues long: NLWQFEMLIMKIALTSGFMFYSSYGCYCGWGGHGRPKDASDRCCFVHDCCYGKVTTCNPKFGVVVCGGDDPCKKQICECDRVAATCFRDNKYWFYGAKXCQEESDPC.

7 disulfides stabilise this stretch: Cys26-Cys100, Cys28-Cys44, Cys43-Cys86, Cys49-Cys107, Cys50-Cys79, Cys57-Cys72, and Cys66-Cys77. 3 residues coordinate Ca(2+): Tyr27, Gly29, and Gly31. His47 is a catalytic residue. Asp48 contributes to the Ca(2+) binding site. Asp80 is an active-site residue.

As to quaternary structure, monomer. Requires Ca(2+) as cofactor. Expressed by the venom gland.

The protein localises to the secreted. It carries out the reaction a 1,2-diacyl-sn-glycero-3-phosphocholine + H2O = a 1-acyl-sn-glycero-3-phosphocholine + a fatty acid + H(+). Its function is as follows. Snake venom phospholipase A2 (PLA2) that induces significant edematogenic activity. Shows mild cytotoxicity on Trypanosoma cruzi and Leishmania infantum. Also inhibits ADP- and collagen-induced platelet aggregation. Does not show myotoxic activity. In Bothrops brazili (Brazil's lancehead), this protein is Acidic phospholipase A2 braziliase-I.